The sequence spans 294 residues: Bifunctional protein FolD (294 aa).

Residues 166-168 (GRS), Ser-191, and Ile-232 each bind NADP(+).

It belongs to the tetrahydrofolate dehydrogenase/cyclohydrolase family. Homodimer.

It carries out the reaction (6R)-5,10-methylene-5,6,7,8-tetrahydrofolate + NADP(+) = (6R)-5,10-methenyltetrahydrofolate + NADPH. It catalyses the reaction (6R)-5,10-methenyltetrahydrofolate + H2O = (6R)-10-formyltetrahydrofolate + H(+). Its pathway is one-carbon metabolism; tetrahydrofolate interconversion. Functionally, catalyzes the oxidation of 5,10-methylenetetrahydrofolate to 5,10-methenyltetrahydrofolate and then the hydrolysis of 5,10-methenyltetrahydrofolate to 10-formyltetrahydrofolate. In Bradyrhizobium sp. (strain ORS 278), this protein is Bifunctional protein FolD.